The chain runs to 440 residues: Guanine/hypoxanthine permease PbuG (440 aa).

13 helical membrane-spanning segments follow: residues 18–38 (IIGG…NPIT), 57–77 (AVFT…GLIA), 81–101 (IAIA…VLGM), 107–127 (AALS…LTGF), 142–162 (AVGA…SGII), 175–195 (IHSG…ILMV), 201–221 (GVFI…LVPV), 251–271 (MLIV…GTLV), 291–311 (ALLA…STTT), 327–347 (GFAA…SPLL), 354–374 (VTAP…GKIA), 388–408 (MIMM…FIFY), and 419–439 (KEVH…FIFL).

This sequence belongs to the nucleobase:cation symporter-2 (NCS2) (TC 2.A.40) family. Azg-like subfamily.

The protein localises to the cell membrane. Functionally, involved in the uptake of the purine bases hypoxanthine and guanine. The sequence is that of Guanine/hypoxanthine permease PbuG (pbuG) from Bacillus subtilis (strain 168).